Consider the following 419-residue polypeptide: Prolyl hydroxylase EGLN2 (419 aa).

Composition is skewed to low complexity over residues 1–18 (MDSP…PQLP) and 64–73 (TTATATTTTA). Disordered stretches follow at residues 1-89 (MDSP…GELW) and 108-181 (AAQG…REEV). Positions 89–134 (WPLQSEGAAALVTKECQRLAAQGARPEAPKRKWAKDGGDAPSPSKR) match the Bipartite nuclear localization signal motif. The span at 115-126 (EAPKRKWAKDGG) shows a compositional bias: basic and acidic residues. S130 is modified (phosphoserine). Over residues 154–174 (SGASNSSSSSSNTTSSSGEAS) the composition is skewed to low complexity. Residues 237–247 (VSQRAIPPRSI) are beta(2)beta(3) 'finger-like' loop. Residues 290–388 (GRTKAMVACY…RYAITVWYFD (99 aa)) enclose the Fe2OG dioxygenase domain. Fe cation contacts are provided by H309, D311, and H370. A 2-oxoglutarate-binding site is contributed by R379.

In terms of assembly, interacts with E3 ligase SIAH2. Interacts with LIMD1, WTIP and AJUBA. Fe(2+) is required as a cofactor. The cofactor is L-ascorbate. Ubiquitinated by SIAH1 and/or SIAH2 in response to the unfolded protein response (UPR), leading to its degradation. Highly expressed in testis, expression was also detected in the heart brain, liver kidney and lung. Expression was lowest in spleen and skeletal muscle. Constitutively expressed during differentiation of C2C12 skeletal myocytes.

The protein localises to the nucleus. It catalyses the reaction L-prolyl-[protein] + 2-oxoglutarate + O2 = trans-4-hydroxy-L-prolyl-[protein] + succinate + CO2. The catalysed reaction is L-prolyl-[hypoxia-inducible factor alpha subunit] + 2-oxoglutarate + O2 = trans-4-hydroxy-L-prolyl-[hypoxia-inducible factor alpha subunit] + succinate + CO2. Functionally, prolyl hydroxylase that mediates hydroxylation of proline residues in target proteins, such as ATF4, IKBKB, CEP192 and HIF1A. Target proteins are preferentially recognized via a LXXLAP motif. Cellular oxygen sensor that catalyzes, under normoxic conditions, the post-translational formation of 4-hydroxyproline in hypoxia-inducible factor (HIF) alpha proteins. Hydroxylates a specific proline found in each of the oxygen-dependent degradation (ODD) domains (N-terminal, NODD, and C-terminal, CODD) of HIF1A. Also hydroxylates HIF2A. Has a preference for the CODD site for both HIF1A and HIF2A. Hydroxylated HIFs are then targeted for proteasomal degradation via the von Hippel-Lindau ubiquitination complex. Under hypoxic conditions, the hydroxylation reaction is attenuated allowing HIFs to escape degradation resulting in their translocation to the nucleus, heterodimerization with HIF1B, and increased expression of hypoxy-inducible genes. EGLN2 is involved in regulating hypoxia tolerance and apoptosis in cardiac and skeletal muscle. Also regulates susceptibility to normoxic oxidative neuronal death. Links oxygen sensing to cell cycle and primary cilia formation by hydroxylating the critical centrosome component CEP192 which promotes its ubiquitination and subsequent proteasomal degradation. Hydroxylates IKBKB, mediating NF-kappa-B activation in hypoxic conditions. Also mediates hydroxylation of ATF4, leading to decreased protein stability of ATF4. The polypeptide is Prolyl hydroxylase EGLN2 (Mus musculus (Mouse)).